Here is a 149-residue protein sequence, read N- to C-terminus: Putative oligosaccharyltransferase complex subunit CG9662 (149 aa).

Topologically, residues 1-32 (MIETLYNLPFHILVPPNIKVRRFSIPMPSPMA) are cytoplasmic. A helical transmembrane segment spans residues 33 to 53 (VFSVILFSYFLVTGGIIYDVI). Topologically, residues 54-83 (VEPPSLGATVDEHGHSRPVAFMPYRVNGQY) are extracellular. A helical membrane pass occupies residues 84–104 (IMEGLASSFLFTVGGLGFIIM). Over 105–117 (DQTHTPGKTNLNR) the chain is Cytoplasmic. The helical transmembrane segment at 118–138 (LLLTAMGFIFILVSFFTTWLF) threads the bilayer. Residues 139 to 149 (MRMKLPSYLQP) lie on the Extracellular side of the membrane.

This sequence belongs to the OSTC family. In terms of assembly, component of the oligosaccharyltransferase (OST) complex.

It is found in the membrane. Subunit of the oligosaccharyl transferase (OST) complex that catalyzes the initial transfer of a defined glycan (Glc(3)Man(9)GlcNAc(2) in eukaryotes) from the lipid carrier dolichol-pyrophosphate to an asparagine residue within an Asn-X-Ser/Thr consensus motif in nascent polypeptide chains, the first step in protein N-glycosylation. N-glycosylation occurs cotranslationally and the complex associates with the Sec61 complex at the channel-forming translocon complex that mediates protein translocation across the endoplasmic reticulum (ER). All subunits are required for a maximal enzyme activity. This is Putative oligosaccharyltransferase complex subunit CG9662 from Drosophila melanogaster (Fruit fly).